The following is a 418-amino-acid chain: MPSIVVVGANWGDEGKGRIVDFLAENASASIRFQGGNNAGHTVVNDFGTFKLHQLPSGIFNPDCIAVLGPGMVISPSALSEEIAEVKAAGVNVKLCISDRATLCLPLHALEDTLEELRLGDAAYGSTRQGISPAYGDRVMKKGILVGWLNQPDVLLERIQFMLDWKMPQLKALYPSCDFSQTAEEMTQWLLDVTAPWRAFICNVTEPLKALQKQNANLLFEAQLGAGRDLVYGEYPYTTSSNVTAAYAGIGSGLPALRPERVVAVAKSFSSSVGTGTLVTAMEEQDNFRESANEYGAVTGRPRDMGYFDAVATRNGVELQAATEIALTKIDCLSGMKDLKICVAYDGDHSENPIWPQTAALSPVYENMQPWDEDITGCRTFDSLPIAAQQYVERIEALMGVPITMVSVGPEREQMIIR.

GTP-binding positions include 12–18 (GDEGKGR) and 40–42 (GHT). Aspartate 13 (proton acceptor) is an active-site residue. Positions 13 and 40 each coordinate Mg(2+). IMP-binding positions include 13 to 16 (DEGK), 38 to 41 (NAGH), threonine 127, lysine 141, threonine 239, and arginine 301. The active-site Proton donor is the histidine 41. 297-303 (AVTGRPR) contacts substrate. GTP contacts are provided by residues arginine 303, 329 to 331 (KID), and 407 to 409 (SVG).

The protein belongs to the adenylosuccinate synthetase family. Homodimer. Mg(2+) serves as cofactor.

The protein resides in the cytoplasm. It catalyses the reaction IMP + L-aspartate + GTP = N(6)-(1,2-dicarboxyethyl)-AMP + GDP + phosphate + 2 H(+). Its pathway is purine metabolism; AMP biosynthesis via de novo pathway; AMP from IMP: step 1/2. Plays an important role in the de novo pathway of purine nucleotide biosynthesis. Catalyzes the first committed step in the biosynthesis of AMP from IMP. The sequence is that of Adenylosuccinate synthetase 2 from Pseudoalteromonas translucida (strain TAC 125).